Reading from the N-terminus, the 590-residue chain is Sulfoacetaldehyde acetyltransferase (590 aa).

It belongs to the TPP enzyme family. It depends on Mg(2+) as a cofactor. Requires thiamine diphosphate as cofactor.

It localises to the cytoplasm. The catalysed reaction is acetyl phosphate + sulfite + H(+) = sulfoacetaldehyde + phosphate. Its pathway is organosulfur degradation; taurine degradation via aerobic pathway; acetyl phosphate and sulfite from taurine: step 2/2. This chain is Sulfoacetaldehyde acetyltransferase, found in Rhodobacter capsulatus (strain ATCC BAA-309 / NBRC 16581 / SB1003).